The primary structure comprises 325 residues: Hydroxymethylglutaryl-CoA lyase, mitochondrial (325 aa).

The N-terminal 27 residues, 1–27, are a transit peptide targeting the mitochondrion; that stretch reads MAAMRKAVPRRLVGLASLRAVSTSSMG. The 268-residue stretch at 33 to 300 folds into the Pyruvate carboxyltransferase domain; the sequence is VKIVEVGPRD…HTGVNLQKLL (268 aa). Position 41 (Arg-41) interacts with substrate. Asp-42 lines the a divalent metal cation pocket. N6-acetyllysine; alternate is present on Lys-48. Lys-48 is subject to N6-succinyllysine; alternate. N6-acetyllysine is present on Lys-111. Residues Lys-137 and Lys-179 each carry the N6-acetyllysine; alternate modification. Residues Lys-137 and Lys-179 each carry the N6-succinyllysine; alternate modification. Positions 233 and 235 each coordinate a divalent metal cation. Residue Cys-266 is part of the active site. Asn-275 is a binding site for a divalent metal cation. The Microbody targeting signal motif lies at 323–325; that stretch reads CKL. At Lys-324 the chain carries N6-acetyllysine.

Belongs to the HMG-CoA lyase family. As to quaternary structure, homodimer; disulfide-linked. Can also form homotetramers.

The protein resides in the mitochondrion matrix. It localises to the peroxisome. The enzyme catalyses (3S)-3-hydroxy-3-methylglutaryl-CoA = acetoacetate + acetyl-CoA. It functions in the pathway metabolic intermediate metabolism; (S)-3-hydroxy-3-methylglutaryl-CoA degradation; acetoacetate from (S)-3-hydroxy-3-methylglutaryl-CoA: step 1/1. Functionally, mitochondrial 3-hydroxy-3-methylglutaryl-CoA lyase that catalyzes a cation-dependent cleavage of (S)-3-hydroxy-3-methylglutaryl-CoA into acetyl-CoA and acetoacetate, a key step in ketogenesis. Terminal step in leucine catabolism. Ketone bodies (beta-hydroxybutyrate, acetoacetate and acetone) are essential as an alternative source of energy to glucose, as lipid precursors and as regulators of metabolism. The sequence is that of Hydroxymethylglutaryl-CoA lyase, mitochondrial (HMGCL) from Pongo abelii (Sumatran orangutan).